The sequence spans 269 residues: MQRYFIYLAYDGTNYHGWQIQPNGSSVQECLMKALSTFLRRDVEVIGAGRTDAGVHASLMVAHFDHEDVLDTVTVADKLNRLLPPDISVYRVRQVKPDAHARFDATARTYKYYVTTAKYPFNRQYRYRVYGSLDYERMNEAARTLFEYIDFTSFSKLHTDVKTNICHISHAEWTKMEGEDTTWVFTIRADRFLRNMVRAIVGTLLEVGRGKLTVEGFRKVIEQQDRCKAGTSAPGNALFLVNVEYPEDIFSEETKKSVLSTLLPEGGEC.

Asp-52 functions as the Nucleophile in the catalytic mechanism. Substrate is bound at residue Tyr-110.

This sequence belongs to the tRNA pseudouridine synthase TruA family. In terms of assembly, homodimer.

It carries out the reaction uridine(38/39/40) in tRNA = pseudouridine(38/39/40) in tRNA. Formation of pseudouridine at positions 38, 39 and 40 in the anticodon stem and loop of transfer RNAs. The sequence is that of tRNA pseudouridine synthase A from Bacteroides thetaiotaomicron (strain ATCC 29148 / DSM 2079 / JCM 5827 / CCUG 10774 / NCTC 10582 / VPI-5482 / E50).